The following is a 488-amino-acid chain: Ribulose bisphosphate carboxylase large chain (488 aa).

2 residues coordinate substrate: Asn127 and Thr177. Catalysis depends on Lys179, which acts as the Proton acceptor. A substrate-binding site is contributed by Lys181. Mg(2+) is bound by residues Lys205, Asp207, and Glu208. Lys205 carries the post-translational modification N6-carboxylysine. The active-site Proton acceptor is the His297. Substrate-binding residues include Arg298, His330, and Ser382.

The protein belongs to the RuBisCO large chain family. Type I subfamily. As to quaternary structure, heterohexadecamer of 8 large chains and 8 small chains. It depends on Mg(2+) as a cofactor.

Its subcellular location is the plastid. It is found in the chloroplast. It carries out the reaction 2 (2R)-3-phosphoglycerate + 2 H(+) = D-ribulose 1,5-bisphosphate + CO2 + H2O. It catalyses the reaction D-ribulose 1,5-bisphosphate + O2 = 2-phosphoglycolate + (2R)-3-phosphoglycerate + 2 H(+). RuBisCO catalyzes two reactions: the carboxylation of D-ribulose 1,5-bisphosphate, the primary event in carbon dioxide fixation, as well as the oxidative fragmentation of the pentose substrate in the photorespiration process. Both reactions occur simultaneously and in competition at the same active site. The sequence is that of Ribulose bisphosphate carboxylase large chain (rbcL) from Porphyra umbilicalis (Purple laver).